The sequence spans 449 residues: Asparagine--tRNA ligase (449 aa).

It belongs to the class-II aminoacyl-tRNA synthetase family. Homodimer.

It localises to the cytoplasm. The enzyme catalyses tRNA(Asn) + L-asparagine + ATP = L-asparaginyl-tRNA(Asn) + AMP + diphosphate + H(+). The protein is Asparagine--tRNA ligase of Deinococcus geothermalis (strain DSM 11300 / CIP 105573 / AG-3a).